An 81-amino-acid polypeptide reads, in one-letter code: U1-sicaritoxin-Li1c (81 aa).

The propeptide occupies Ala-1–Arg-16. Disulfide bonds link Cys-18–Cys-35, Cys-26–Cys-40, Cys-34–Cys-53, and Cys-42–Cys-51. Arg-62 is modified (arginine amide). The propeptide occupies Ala-66–Asp-81.

It belongs to the neurotoxin 28 (Litx) family. As to expression, expressed by the venom gland.

It is found in the secreted. Toxin active against insects (S.frugiperda larvae). May act on sodium (Nav) or calcium (Cav) channels. The chain is U1-sicaritoxin-Li1c from Loxosceles intermedia (Brown spider).